The sequence spans 326 residues: Nucleotide sugar transporter SLC35D2 (326 aa).

Topologically, residues 1-15 (MEEPNAAPLPSRLAR) are extracellular. The helical transmembrane segment at 16-36 (LLSALFYGTCSFLIVLVNKAL) threads the bilayer. Residues 37 to 41 (LTTYG) are Cytoplasmic-facing. Residues 42–62 (FPSPIVLGIGQMATTIMILYV) traverse the membrane as a helical segment. The Extracellular portion of the chain corresponds to 63–130 (FKLNKIIHFP…LLEAIILGTQ (68 aa)). Residues 131-151 (YSLNIILSVLAIVLGAFIAAG) form a helical membrane-spanning segment. Residues 152 to 155 (SDLT) lie on the Cytoplasmic side of the membrane. The chain crosses the membrane as a helical span at residues 156–176 (FNLEGYVFVFLNDIFTAANGV). The Extracellular portion of the chain corresponds to 177-189 (YTKQKMDPKELGK). Residues 190 to 210 (YGVLFYNACFMLIPTVIISVS) traverse the membrane as a helical segment. The Cytoplasmic portion of the chain corresponds to 211 to 225 (TGDFQQATEFRHWKN). A helical membrane pass occupies residues 226–246 (VLFIIQFLLSCLLGFLLMYST). The Extracellular portion of the chain corresponds to 247–253 (ALCSYYN). The chain crosses the membrane as a helical span at residues 254-276 (SALTTAVVGAIKNVSVAYIGMLV). Topologically, residues 277–280 (GGDY) are cytoplasmic. Residues 281-303 (IFSLLNFIGLNICMAGGLRYSFL) traverse the membrane as a helical segment. The Extracellular segment spans residues 304–326 (TLSSQLKPKQPVDEESIPLDLKS).

Belongs to the TPT transporter family. SLC35D subfamily.

It is found in the golgi apparatus membrane. The catalysed reaction is UMP(out) + UDP-N-acetyl-alpha-D-glucosamine(in) = UMP(in) + UDP-N-acetyl-alpha-D-glucosamine(out). The enzyme catalyses UMP(out) + UDP-alpha-D-glucose(in) = UMP(in) + UDP-alpha-D-glucose(out). Its function is as follows. Nucleotide sugar antiporter transporting UDP-N-acetylglucosamine (UDP-GlcNAc) and UDP-glucose (UDP-Glc) from the cytosol into the lumen of the Golgi in exchange of UMP. By supplying UDP-N-acetylglucosamine, a donor substrate to heparan sulfate synthases, probably takes part in the synthesis of these glycoconjugates. The sequence is that of Nucleotide sugar transporter SLC35D2 from Mus musculus (Mouse).